Here is a 648-residue protein sequence, read N- to C-terminus: Mitotic interactor and substrate of PLK1 (648 aa).

The residue at position 77 (Ser-77) is a Phosphoserine; by CDK1. 2 positions are modified to phosphothreonine: Thr-149 and Thr-190. Ser-220 carries the phosphoserine modification. Disordered regions lie at residues 242–383 (VNDP…PEAR) and 430–460 (KATE…GKAT). At Ser-253 the chain carries Phosphoserine; by CDK1. Residues 255–281 (ETPKETPIEREIRLAQEREAELREQRG) show a composition bias toward basic and acidic residues. At Thr-256 the chain carries Phosphothreonine; by CDK1. At Ser-318 the chain carries Phosphoserine. Residues 325-339 (MVQETQREEDHRREG) are compositionally biased toward basic and acidic residues. A Phosphothreonine; by CDK1 modification is found at Thr-347. Positions 349-367 (DWPSQDPQPGLQRSLSSDC) are enriched in polar residues. A phosphoserine mark is found at Ser-352 and Ser-364. Ser-365 and Ser-439 each carry phosphoserine; by PLK1. Residues 440–450 (ESSGRSLSSKQ) are compositionally biased toward polar residues. A phosphoserine mark is found at Ser-507 and Ser-509. The stretch at 511–534 (DLLEREMESVLRREREVAEERRNA) forms a coiled coil. The segment at 539-568 (VFSPVPAEDESHEQDSRSSSRASGITGSYS) is disordered. Ser-541 is subject to Phosphoserine; by CDK1. At Ser-554 the chain carries Phosphoserine; by PLK1. Residues 557-568 (SSRASGITGSYS) are compositionally biased toward polar residues. Position 644 is a phosphoserine (Ser-644).

The protein belongs to the MISP family. In terms of assembly, associates with F-actin. Interacts with DCTN1; this interaction regulates DCTN1 distribution at the cell cortex. Interacts with PTK2/FAK and MAPRE1. Phosphorylated by CDK1 and PLK1. CDK1 is the priming kinase for PLK1 phosphorylation. Phosphorylation by PLK1 is required for proper spindle orientation at metaphase.

It localises to the cell junction. It is found in the focal adhesion. The protein localises to the cytoplasm. Its subcellular location is the cytoskeleton. The protein resides in the cell cortex. Functionally, plays a role in mitotic spindle orientation and mitotic progression. Regulates the distribution of dynactin at the cell cortex in a PLK1-dependent manner, thus stabilizing cortical and astral microtubule attachments required for proper mitotic spindle positioning. May link microtubules to the actin cytoskeleton and focal adhesions. May be required for directed cell migration and centrosome orientation. May also be necessary for proper stacking of the Golgi apparatus. This chain is Mitotic interactor and substrate of PLK1, found in Mus musculus (Mouse).